Consider the following 277-residue polypeptide: Large ribosomal subunit protein uL2 (277 aa).

Disordered stretches follow at residues 32-58 and 225-277; these read KSLT…RGGG and VAMN…RRNK. Over residues 258-277 the composition is skewed to basic residues; it reads YKTRKKKRYSDKFIIKRRNK.

It belongs to the universal ribosomal protein uL2 family. In terms of assembly, part of the 50S ribosomal subunit. Forms a bridge to the 30S subunit in the 70S ribosome.

Functionally, one of the primary rRNA binding proteins. Required for association of the 30S and 50S subunits to form the 70S ribosome, for tRNA binding and peptide bond formation. It has been suggested to have peptidyltransferase activity; this is somewhat controversial. Makes several contacts with the 16S rRNA in the 70S ribosome. In Borrelia garinii subsp. bavariensis (strain ATCC BAA-2496 / DSM 23469 / PBi) (Borreliella bavariensis), this protein is Large ribosomal subunit protein uL2.